A 373-amino-acid chain; its full sequence is Probable tRNA sulfurtransferase (373 aa).

In terms of domain architecture, THUMP spans 54–158 (NKNIEELSKV…NDVAYFYHKI (105 aa)). Residues 176–177 (LF), 201–202 (NF), lysine 256, glycine 278, and glutamine 287 each bind ATP.

It belongs to the ThiI family.

The protein resides in the cytoplasm. The catalysed reaction is [ThiI sulfur-carrier protein]-S-sulfanyl-L-cysteine + a uridine in tRNA + 2 reduced [2Fe-2S]-[ferredoxin] + ATP + H(+) = [ThiI sulfur-carrier protein]-L-cysteine + a 4-thiouridine in tRNA + 2 oxidized [2Fe-2S]-[ferredoxin] + AMP + diphosphate. It catalyses the reaction [ThiS sulfur-carrier protein]-C-terminal Gly-Gly-AMP + S-sulfanyl-L-cysteinyl-[cysteine desulfurase] + AH2 = [ThiS sulfur-carrier protein]-C-terminal-Gly-aminoethanethioate + L-cysteinyl-[cysteine desulfurase] + A + AMP + 2 H(+). Its pathway is cofactor biosynthesis; thiamine diphosphate biosynthesis. Catalyzes the ATP-dependent transfer of a sulfur to tRNA to produce 4-thiouridine in position 8 of tRNAs, which functions as a near-UV photosensor. Also catalyzes the transfer of sulfur to the sulfur carrier protein ThiS, forming ThiS-thiocarboxylate. This is a step in the synthesis of thiazole, in the thiamine biosynthesis pathway. The sulfur is donated as persulfide by IscS. The protein is Probable tRNA sulfurtransferase of Saccharolobus islandicus (strain M.14.25 / Kamchatka #1) (Sulfolobus islandicus).